The following is a 501-amino-acid chain: ATP synthase subunit alpha (501 aa).

Residue 169–176 (GDRQTGKT) coordinates ATP.

It belongs to the ATPase alpha/beta chains family. F-type ATPases have 2 components, CF(1) - the catalytic core - and CF(0) - the membrane proton channel. CF(1) has five subunits: alpha(3), beta(3), gamma(1), delta(1), epsilon(1). CF(0) has three main subunits: a(1), b(2) and c(9-12). The alpha and beta chains form an alternating ring which encloses part of the gamma chain. CF(1) is attached to CF(0) by a central stalk formed by the gamma and epsilon chains, while a peripheral stalk is formed by the delta and b chains.

It localises to the cell membrane. The catalysed reaction is ATP + H2O + 4 H(+)(in) = ADP + phosphate + 5 H(+)(out). Produces ATP from ADP in the presence of a proton gradient across the membrane. The alpha chain is a regulatory subunit. The chain is ATP synthase subunit alpha from Streptococcus pyogenes serotype M2 (strain MGAS10270).